The following is a 115-amino-acid chain: Large ribosomal subunit protein bL20 (115 aa).

This sequence belongs to the bacterial ribosomal protein bL20 family.

In terms of biological role, binds directly to 23S ribosomal RNA and is necessary for the in vitro assembly process of the 50S ribosomal subunit. It is not involved in the protein synthesizing functions of that subunit. In Prochlorococcus marinus (strain MIT 9515), this protein is Large ribosomal subunit protein bL20.